The sequence spans 374 residues: tRNA-specific 2-thiouridylase MnmA (374 aa).

Residues 17 to 24 (GMSGGVDS) and Met43 contribute to the ATP site. Residues 103-105 (NPD) form an interaction with target base in tRNA region. Cys108 (nucleophile) is an active-site residue. Cys108 and Cys204 are joined by a disulfide. ATP is bound at residue Gly132. Residues 154 to 156 (KDQ) form an interaction with tRNA region. The active-site Cysteine persulfide intermediate is Cys204. Positions 316-317 (RY) are interaction with tRNA.

Belongs to the MnmA/TRMU family.

The protein localises to the cytoplasm. The catalysed reaction is S-sulfanyl-L-cysteinyl-[protein] + uridine(34) in tRNA + AH2 + ATP = 2-thiouridine(34) in tRNA + L-cysteinyl-[protein] + A + AMP + diphosphate + H(+). In terms of biological role, catalyzes the 2-thiolation of uridine at the wobble position (U34) of tRNA, leading to the formation of s(2)U34. The chain is tRNA-specific 2-thiouridylase MnmA from Pseudomonas putida (strain GB-1).